We begin with the raw amino-acid sequence, 327 residues long: Phospho-N-acetylmuramoyl-pentapeptide-transferase (327 aa).

The next 10 helical transmembrane spans lie at 3-23 (IALI…PAFI), 51-71 (TMGG…IGLF), 75-95 (LSNG…VGFL), 115-135 (LFLQ…HGAG), 140-160 (IFTV…FWLI), 172-192 (IDGL…VIAV), 197-217 (FDIL…FVFN), 223-243 (IFMG…ISIS), 248-268 (WTLL…MMQV), and 306-326 (VDFF…AILY).

The protein belongs to the glycosyltransferase 4 family. MraY subfamily. Requires Mg(2+) as cofactor.

It is found in the cell membrane. The catalysed reaction is UDP-N-acetyl-alpha-D-muramoyl-L-alanyl-gamma-D-glutamyl-L-lysyl-D-alanyl-D-alanine + di-trans,octa-cis-undecaprenyl phosphate = Mur2Ac(oyl-L-Ala-gamma-D-Glu-L-Lys-D-Ala-D-Ala)-di-trans,octa-cis-undecaprenyl diphosphate + UMP. Its pathway is cell wall biogenesis; peptidoglycan biosynthesis. Functionally, catalyzes the initial step of the lipid cycle reactions in the biosynthesis of the cell wall peptidoglycan: transfers peptidoglycan precursor phospho-MurNAc-pentapeptide from UDP-MurNAc-pentapeptide onto the lipid carrier undecaprenyl phosphate, yielding undecaprenyl-pyrophosphoryl-MurNAc-pentapeptide, known as lipid I. This is Phospho-N-acetylmuramoyl-pentapeptide-transferase from Streptococcus sanguinis (strain SK36).